The chain runs to 607 residues: MAEKRRGSPCSMLSLKAHAFSVEALIGAEKQQQLQKKRRKLGAEEAAGAVDDGGCSRGGGAGEKGSSEGDEGAALPPPAGATSGPARSGADLERGAAGGCEDGFQQGASPLASPGGSPKGSPARSLARPGTPLPSPQAPRVDLQGAELWKRFHEIGTEMIITKAGRRMFPAMRVKISGLDPHQQYYIAMDIVPVDNKRYRYVYHSSKWMVAGNADSPVPPRVYIHPDSPASGETWMRQVISFDKLKLTNNELDDQGHIILHSMHKYQPRVHVIRKDCGDDLSPIKPVPSGEGVKAFSFPETVFTTVTAYQNQQITRLKIDRNPFAKGFRDSGRNRMGLEALVESYAFWRPSLRTLTFEDIPGIPKQGNASSSTLLQGTGNGVPATHPHLLSGSSCSSPAFHLGPNTSQLCSLAPADYSACARSGLTLNRYSTSLAETYNRLTNQAGETFAPPRTPSYVGVSSSTSVNMSMGGTDGDTFSCPQTSLSMQISGMSPQLQYIMPSPSSNAFATNQTHQGSYNTFRLHSPCALYGYNFSTSPKLAASPEKIVSSQGSFLGSSPSGTMTDRQMLPPVEGVHLLSSGGQQSFFDSRTLGSLTLSSSQVSAHMV.

The short motif at 18–28 (HAFSVEALIGA) is the Engrailed homology 1 repressor element. Residues 30–141 (KQQQLQKKRR…PLPSPQAPRV (112 aa)) are disordered. Positions 36–40 (KKRRK) match the Nuclear localization signal motif. Positions 44–53 (EEAAGAVDDG) are enriched in low complexity. A DNA-binding region (T-box) is located at residues 143–330 (LQGAELWKRF…RNPFAKGFRD (188 aa)).

Homodimer. Can form a heterodimer with TBX15. Interacts with GATA4 and NKX2-5. Interacts with PAX3. Interacts (via engrailed homology 1 repressor motif) with TLE3; this interaction represses TBX18 transcriptional activity. Interacts with SIX1.

It is found in the nucleus. Acts as a transcriptional repressor involved in developmental processes of a variety of tissues and organs, including the heart and coronary vessels, the ureter and the vertebral column. Required for embryonic development of the sino atrial node (SAN) head area. This is T-box transcription factor TBX18 (TBX18) from Homo sapiens (Human).